We begin with the raw amino-acid sequence, 71 residues long: Dermonecrotic toxin LgSicTox-alphaI-Loxn-A (71 aa).

The active site involves His-12. Mg(2+)-binding residues include Glu-32, Asp-34, and Asp-48.

Requires Mg(2+) as cofactor. Post-translationally, contains 2 disulfide bonds. In terms of tissue distribution, expressed by the venom gland.

It is found in the secreted. The enzyme catalyses an N-(acyl)-sphingosylphosphocholine = an N-(acyl)-sphingosyl-1,3-cyclic phosphate + choline. It carries out the reaction an N-(acyl)-sphingosylphosphoethanolamine = an N-(acyl)-sphingosyl-1,3-cyclic phosphate + ethanolamine. The catalysed reaction is a 1-acyl-sn-glycero-3-phosphocholine = a 1-acyl-sn-glycero-2,3-cyclic phosphate + choline. It catalyses the reaction a 1-acyl-sn-glycero-3-phosphoethanolamine = a 1-acyl-sn-glycero-2,3-cyclic phosphate + ethanolamine. In terms of biological role, catalyzes the hydrolysis of sphingomyelin. May also act on other phosphatidyl esters. Its function is as follows. Dermonecrotic toxins cleave the phosphodiester linkage between the phosphate and headgroup of certain phospholipids (sphingolipid and lysolipid substrates), forming an alcohol (often choline) and a cyclic phosphate. This toxin acts on sphingomyelin (SM). It may also act on ceramide phosphoethanolamine (CPE), lysophosphatidylcholine (LPC) and lysophosphatidylethanolamine (LPE), but not on lysophosphatidylserine (LPS), and lysophosphatidylglycerol (LPG). It acts by transphosphatidylation, releasing exclusively cyclic phosphate products as second products. In vivo, induces dermonecrosis, but is not lethal. Induces hemolysis, vascular permeability, edema, inflammatory response, and platelet aggregation. The chain is Dermonecrotic toxin LgSicTox-alphaI-Loxn-A from Loxosceles gaucho (Spider).